Reading from the N-terminus, the 210-residue chain is MKPYIIGISGISGSGKSTFAANLKTKCGDFYAGDVVIINLDGFYRSINEDDMCLVKAGEYNFDHPYAIDLDHARRCISAIADGHLVAVPIYDFEKKKCVGHYEVNNPRVVIVEGIHALHPKLFPLYDITAFLEVPMSVALSRRAVRDNKERGRTPEDTAEMFRKFVLPMYKLHVEPNVKKAAILVNGLNTGVHINMLYEHIKPLLIYPRF.

10 to 18 contributes to the ATP binding site; the sequence is GISGSGKST. Asp41 is a catalytic residue.

The protein belongs to the uridine kinase family. As to quaternary structure, interacts with host eIF-2B; this interaction disrupts the interaction between eIF2 and eIF-2B, which leads to the inhibition of stress granules formation.

It is found in the host cytoplasm. The protein resides in the host perinuclear region. It carries out the reaction uridine + ATP = UMP + ADP + H(+). Inhibits the integrated stress response (ISR) in the infected cell by preventing the sequestration of eIF2B by phosphorylated EIF2S1/eIF-2alpha. Stress granule formation in response to EIF2S1/eIF-2alpha phosphorylation is thus inhibited, which allows protein synthesis and viral replication. Phosphorylates uridine to uridine monophosphate. This is Uridine kinase P10 (ORF10) from Beluga whale coronavirus (strain SW1) (BwCoV).